The sequence spans 260 residues: 3'-5' ssDNA/RNA exonuclease TatD (260 aa).

Residues E91, H127, and H152 each contribute to the a divalent metal cation site.

The protein belongs to the metallo-dependent hydrolases superfamily. TatD-type hydrolase family. TatD subfamily. In terms of assembly, monomer. Mg(2+) is required as a cofactor. It depends on Mn(2+) as a cofactor.

It is found in the cytoplasm. Functionally, 3'-5' exonuclease that prefers single-stranded DNA and RNA. May play a role in the H(2)O(2)-induced DNA damage repair. The protein is 3'-5' ssDNA/RNA exonuclease TatD of Escherichia coli (strain K12).